Consider the following 320-residue polypeptide: Lipoyl synthase (320 aa).

Residues 1–27 (MRVEIDHRNSGGGKLRHPEKQHRPDNP) form a disordered region. Basic and acidic residues predominate over residues 16–25 (RHPEKQHRPD). [4Fe-4S] cluster-binding residues include C61, C66, C72, C87, C91, C94, and S300. A Radical SAM core domain is found at 73–289 (WSQRHATMMI…AAMARAKGFL (217 aa)).

Belongs to the radical SAM superfamily. Lipoyl synthase family. Requires [4Fe-4S] cluster as cofactor.

It localises to the cytoplasm. It carries out the reaction [[Fe-S] cluster scaffold protein carrying a second [4Fe-4S](2+) cluster] + N(6)-octanoyl-L-lysyl-[protein] + 2 oxidized [2Fe-2S]-[ferredoxin] + 2 S-adenosyl-L-methionine + 4 H(+) = [[Fe-S] cluster scaffold protein] + N(6)-[(R)-dihydrolipoyl]-L-lysyl-[protein] + 4 Fe(3+) + 2 hydrogen sulfide + 2 5'-deoxyadenosine + 2 L-methionine + 2 reduced [2Fe-2S]-[ferredoxin]. It participates in protein modification; protein lipoylation via endogenous pathway; protein N(6)-(lipoyl)lysine from octanoyl-[acyl-carrier-protein]: step 2/2. Its function is as follows. Catalyzes the radical-mediated insertion of two sulfur atoms into the C-6 and C-8 positions of the octanoyl moiety bound to the lipoyl domains of lipoate-dependent enzymes, thereby converting the octanoylated domains into lipoylated derivatives. The protein is Lipoyl synthase of Acidiphilium cryptum (strain JF-5).